A 252-amino-acid chain; its full sequence is 5'-nucleotidase SurE (252 aa).

Asp-8, Asp-9, Ser-39, and Asn-91 together coordinate a divalent metal cation.

It belongs to the SurE nucleotidase family. A divalent metal cation is required as a cofactor.

It localises to the cytoplasm. The catalysed reaction is a ribonucleoside 5'-phosphate + H2O = a ribonucleoside + phosphate. Nucleotidase that shows phosphatase activity on nucleoside 5'-monophosphates. The chain is 5'-nucleotidase SurE from Geobacter metallireducens (strain ATCC 53774 / DSM 7210 / GS-15).